We begin with the raw amino-acid sequence, 219 residues long: Urease subunit gamma/beta (219 aa).

The urease gamma stretch occupies residues 1-101; sequence MFLTPREQEK…LVTVRNPIKS (101 aa). Residues 102 to 219 form a urease beta region; it reads SKKTLNTYII…IKRAKERGFA (118 aa).

This sequence in the N-terminal section; belongs to the urease gamma subunit family. The protein in the C-terminal section; belongs to the urease beta subunit family. As to quaternary structure, heterohexamer of 3 UreC (alpha) and 3 UreAB (gamma/beta) subunits.

The protein resides in the cytoplasm. The catalysed reaction is urea + 2 H2O + H(+) = hydrogencarbonate + 2 NH4(+). It participates in nitrogen metabolism; urea degradation; CO(2) and NH(3) from urea (urease route): step 1/1. The sequence is that of Urease subunit gamma/beta from Sulfurisphaera tokodaii (strain DSM 16993 / JCM 10545 / NBRC 100140 / 7) (Sulfolobus tokodaii).